A 65-amino-acid chain; its full sequence is Small ribosomal subunit protein bS21 (65 aa).

This sequence belongs to the bacterial ribosomal protein bS21 family.

The polypeptide is Small ribosomal subunit protein bS21 (Chlorobaculum parvum (strain DSM 263 / NCIMB 8327) (Chlorobium vibrioforme subsp. thiosulfatophilum)).